Here is a 591-residue protein sequence, read N- to C-terminus: L-fucose isomerase (591 aa).

Catalysis depends on proton acceptor residues Glu337 and Asp361. Mn(2+) contacts are provided by Glu337, Asp361, and His528.

The protein belongs to the L-fucose isomerase family. In terms of assembly, homohexamer. Mn(2+) serves as cofactor.

It is found in the cytoplasm. It carries out the reaction L-fucose = L-fuculose. Its pathway is carbohydrate degradation; L-fucose degradation; L-lactaldehyde and glycerone phosphate from L-fucose: step 1/3. Its function is as follows. Converts the aldose L-fucose into the corresponding ketose L-fuculose. The sequence is that of L-fucose isomerase from Escherichia coli (strain SE11).